Here is a 439-residue protein sequence, read N- to C-terminus: tRNA modification GTPase MnmE (439 aa).

Positions 24, 81, and 121 each coordinate (6S)-5-formyl-5,6,7,8-tetrahydrofolate. One can recognise a TrmE-type G domain in the interval 218–363; sequence GFKVVIAGAP…LRDLIGRVVK (146 aa). Residue Asn228 participates in K(+) binding. GTP is bound by residues 228–233, 247–253, and 272–275; these read NAGKSS, TDIAGTT, and DTAG. Ser232 is a Mg(2+) binding site. Positions 247, 249, and 252 each coordinate K(+). Thr253 contacts Mg(2+). Lys439 is a (6S)-5-formyl-5,6,7,8-tetrahydrofolate binding site.

The protein belongs to the TRAFAC class TrmE-Era-EngA-EngB-Septin-like GTPase superfamily. TrmE GTPase family. As to quaternary structure, homodimer. Heterotetramer of two MnmE and two MnmG subunits. K(+) is required as a cofactor.

The protein resides in the cytoplasm. In terms of biological role, exhibits a very high intrinsic GTPase hydrolysis rate. Involved in the addition of a carboxymethylaminomethyl (cmnm) group at the wobble position (U34) of certain tRNAs, forming tRNA-cmnm(5)s(2)U34. The protein is tRNA modification GTPase MnmE of Rhizobium etli (strain CIAT 652).